Consider the following 517-residue polypeptide: Glutamyl-tRNA(Gln) amidotransferase subunit A, mitochondrial (517 aa).

Residues Lys-58 and Ser-131 each act as charge relay system in the active site. The interval 106–132 is disordered; it reads FGMGTHSTHSAHGPVASPAGRSAGGSS. Ser-155 (acyl-ester intermediate) is an active-site residue.

It belongs to the amidase family. GatA subfamily. Subunit of the heterotrimeric GatCAB amidotransferase (AdT) complex, composed of A, B and C subunits.

It localises to the mitochondrion. The enzyme catalyses L-glutamyl-tRNA(Gln) + L-glutamine + ATP + H2O = L-glutaminyl-tRNA(Gln) + L-glutamate + ADP + phosphate + H(+). Its function is as follows. Allows the formation of correctly charged Gln-tRNA(Gln) through the transamidation of misacylated Glu-tRNA(Gln) in the mitochondria. The reaction takes place in the presence of glutamine and ATP through an activated gamma-phospho-Glu-tRNA(Gln). The protein is Glutamyl-tRNA(Gln) amidotransferase subunit A, mitochondrial of Pyricularia oryzae (strain 70-15 / ATCC MYA-4617 / FGSC 8958) (Rice blast fungus).